A 316-amino-acid polypeptide reads, in one-letter code: Ribosomal RNA small subunit methyltransferase H (316 aa).

S-adenosyl-L-methionine-binding positions include 35–37 (AGH), Asp-55, Phe-84, Asp-105, and Gln-112.

This sequence belongs to the methyltransferase superfamily. RsmH family.

It is found in the cytoplasm. It catalyses the reaction cytidine(1402) in 16S rRNA + S-adenosyl-L-methionine = N(4)-methylcytidine(1402) in 16S rRNA + S-adenosyl-L-homocysteine + H(+). Its function is as follows. Specifically methylates the N4 position of cytidine in position 1402 (C1402) of 16S rRNA. The protein is Ribosomal RNA small subunit methyltransferase H of Streptococcus thermophilus (strain ATCC BAA-250 / LMG 18311).